Here is a 287-residue protein sequence, read N- to C-terminus: Probable endonuclease 4 (287 aa).

Positions 69, 109, 144, 178, 181, 215, 228, 230, and 260 each coordinate Zn(2+).

The protein belongs to the AP endonuclease 2 family. The cofactor is Zn(2+).

The catalysed reaction is Endonucleolytic cleavage to 5'-phosphooligonucleotide end-products.. Endonuclease IV plays a role in DNA repair. It cleaves phosphodiester bonds at apurinic or apyrimidinic (AP) sites, generating a 3'-hydroxyl group and a 5'-terminal sugar phosphate. The protein is Probable endonuclease 4 of Thermotoga neapolitana (strain ATCC 49049 / DSM 4359 / NBRC 107923 / NS-E).